The primary structure comprises 175 residues: Large ribosomal subunit protein mL67 (175 aa).

The protein belongs to the mitochondrion-specific ribosomal protein mL67 family. As to quaternary structure, component of the mitochondrial large ribosomal subunit (mt-LSU). Mature yeast 74S mitochondrial ribosomes consist of a small (37S) and a large (54S) subunit. The 37S small subunit contains a 15S ribosomal RNA (15S mt-rRNA) and at least 32 different proteins. The 54S large subunit contains a 21S rRNA (21S mt-rRNA) and at least 45 different proteins.

The protein resides in the mitochondrion. In terms of biological role, component of the mitochondrial ribosome (mitoribosome), a dedicated translation machinery responsible for the synthesis of mitochondrial genome-encoded proteins, including at least some of the essential transmembrane subunits of the mitochondrial respiratory chain. The mitoribosomes are attached to the mitochondrial inner membrane and translation products are cotranslationally integrated into the membrane. mL67/mhr1 also has extraribosomal functions, being involved in regulation of mitochondrial DNA recombination, maintenance and repair, and generation of homoplasmic cells. mL67/mhr1 also acts as transcription factor involved in regulation of RNA polymerase II-dependent transcription. The polypeptide is Large ribosomal subunit protein mL67 (mhr1) (Schizosaccharomyces pombe (strain 972 / ATCC 24843) (Fission yeast)).